Here is a 557-residue protein sequence, read N- to C-terminus: CDP-diacylglycerol--glycerol-3-phosphate 3-phosphatidyltransferase, mitochondrial (557 aa).

The N-terminal 25 residues, 1–25, are a transit peptide targeting the mitochondrion; sequence MAAAGGAALWRRLAAWLPRGPPGLA. 121–128 contacts ATP; it reads ASLYLGTG. The 27-residue stretch at 212 to 238 folds into the PLD phosphodiesterase 1 domain; it reads TIGLQHIKVYLFDDNVILSGANLSDLY. Catalysis depends on residues histidine 217, lysine 219, and aspartate 224. Residues 322–346 form a disordered region; that stretch reads TFHSSQQGSSMLPQHDSEASEGLKP. Residues 323-333 show a composition bias toward polar residues; sequence FHSSQQGSSML. A compositionally biased stretch (basic and acidic residues) spans 336-346; it reads HDSEASEGLKP. One can recognise a PLD phosphodiesterase 2 domain in the interval 461 to 494; sequence AGWTFHAKGLWLYLAGSSLPCLTLIGSPNFGYRS.

It belongs to the CDP-alcohol phosphatidyltransferase class-II family.

It localises to the mitochondrion. The catalysed reaction is a CDP-1,2-diacyl-sn-glycerol + sn-glycerol 3-phosphate = a 1,2-diacyl-sn-glycero-3-phospho-(1'-sn-glycero-3'-phosphate) + CMP + H(+). It functions in the pathway phospholipid metabolism; phosphatidylglycerol biosynthesis; phosphatidylglycerol from CDP-diacylglycerol: step 1/2. Activated by calcium and magnesium and inhibited by other bivalent cations. Functions in the biosynthesis of the anionic phospholipids phosphatidylglycerol and cardiolipin. In Gallus gallus (Chicken), this protein is CDP-diacylglycerol--glycerol-3-phosphate 3-phosphatidyltransferase, mitochondrial (PGS1).